We begin with the raw amino-acid sequence, 154 residues long: MVKAVCVLRGDAKVGGTVTFEQESESAPTTITYDLTGNDPNAERGFHIHTFGDNTNGCTSAGPHFNPHGKTHGAPTDAARHVGDLGNVKTDAQGNAKGSIQDSQVKLIGPHSVIGRTVVVHAGTDDLGKGGNEESLKTGNAGPRPACGVIGVAN.

Cu cation contacts are provided by His-47, His-49, and His-64. Cysteines 58 and 147 form a disulfide. Positions 64, 72, 81, and 84 each coordinate Zn(2+). His-121 provides a ligand contact to Cu cation. Basic and acidic residues predominate over residues 125-136 (DDLGKGGNEESL). The interval 125 to 144 (DDLGKGGNEESLKTGNAGPR) is disordered. Arg-144 contacts substrate.

Belongs to the Cu-Zn superoxide dismutase family. In terms of assembly, homodimer. Cu cation is required as a cofactor. The cofactor is Zn(2+).

The protein localises to the cytoplasm. The enzyme catalyses 2 superoxide + 2 H(+) = H2O2 + O2. Functionally, destroys radicals which are normally produced within the cells and which are toxic to biological systems. The sequence is that of Superoxide dismutase [Cu-Zn] (SOD1) from Cordyceps tenuipes (Entomopathogenic fungus).